A 358-amino-acid chain; its full sequence is Peptide chain release factor 1 (358 aa).

Gln-235 is subject to N5-methylglutamine.

The protein belongs to the prokaryotic/mitochondrial release factor family. In terms of processing, methylated by PrmC. Methylation increases the termination efficiency of RF1.

It localises to the cytoplasm. Its function is as follows. Peptide chain release factor 1 directs the termination of translation in response to the peptide chain termination codons UAG and UAA. In Neisseria gonorrhoeae (strain NCCP11945), this protein is Peptide chain release factor 1.